The following is a 730-amino-acid chain: Rap1 GTPase-activating protein 2 (730 aa).

One can recognise a Rap-GAP domain in the interval 247–463; the sequence is IVAYDEHEVN…RTRAALLDNL (217 aa). 2 disordered regions span residues 510-668 and 698-730; these read MVGS…STAS and SRSPTDIKNRNSPRSNLKFRFDKLSHGSSSTSH. Polar residues-rich tracts occupy residues 535 to 557 and 597 to 612; these read GEVTKTTFSPPVSAATAKNQSRS and HSSQEMKSETSSNPSS. A compositionally biased stretch (basic and acidic residues) spans 617–630; that stretch reads PNKDRPFVKLKENG. Residues 631 to 651 are compositionally biased toward low complexity; sequence RSNISRSSSSTSSFSSTAGES. The span at 699–712 shows a compositional bias: polar residues; it reads RSPTDIKNRNSPRS.

The protein localises to the cytoplasm. In terms of biological role, GTPase activator for the nuclear Ras-related regulatory protein RAP-1A (KREV-1), converting it to the putatively inactive GDP-bound state. The polypeptide is Rap1 GTPase-activating protein 2 (RAP1GAP2) (Gallus gallus (Chicken)).